The following is a 525-amino-acid chain: Eukaryotic translation initiation factor 3 subunit E (525 aa).

Residues 102 to 120 show a composition bias toward basic and acidic residues; the sequence is QKELKEQQKEQQKEKDTDK. The disordered stretch occupies residues 102–143; sequence QKELKEQQKEQQKEKDTDKTTPTTTDETTTTTTTAPTTTTTT. Positions 121 to 143 are enriched in low complexity; sequence TTPTTTDETTTTTTTAPTTTTTT. The 180-residue stretch at 261 to 440 folds into the PCI domain; the sequence is VYFYNPESRS…NQIKMFTQHN (180 aa). The segment at 463–525 is disordered; the sequence is INESRSQQNR…TTTTATPTSA (63 aa). Residues 482-525 show a composition bias toward low complexity; that stretch reads RGQNRNQQNQQNQQSNESNETTTTTTTAAAATTTTTTTATPTSA.

The protein belongs to the eIF-3 subunit E family. Component of the eukaryotic translation initiation factor 3 (eIF-3) complex.

The protein localises to the cytoplasm. Component of the eukaryotic translation initiation factor 3 (eIF-3) complex, which is involved in protein synthesis of a specialized repertoire of mRNAs and, together with other initiation factors, stimulates binding of mRNA and methionyl-tRNAi to the 40S ribosome. The eIF-3 complex specifically targets and initiates translation of a subset of mRNAs involved in cell proliferation. The chain is Eukaryotic translation initiation factor 3 subunit E (eif3E) from Dictyostelium discoideum (Social amoeba).